We begin with the raw amino-acid sequence, 746 residues long: 1,4-alpha-glucan branching enzyme GlgB (746 aa).

The active-site Nucleophile is aspartate 418. The Proton donor role is filled by glutamate 471.

It belongs to the glycosyl hydrolase 13 family. GlgB subfamily. Monomer.

The catalysed reaction is Transfers a segment of a (1-&gt;4)-alpha-D-glucan chain to a primary hydroxy group in a similar glucan chain.. Its pathway is glycan biosynthesis; glycogen biosynthesis. Functionally, catalyzes the formation of the alpha-1,6-glucosidic linkages in glycogen by scission of a 1,4-alpha-linked oligosaccharide from growing alpha-1,4-glucan chains and the subsequent attachment of the oligosaccharide to the alpha-1,6 position. In Nitrosospira multiformis (strain ATCC 25196 / NCIMB 11849 / C 71), this protein is 1,4-alpha-glucan branching enzyme GlgB.